A 546-amino-acid polypeptide reads, in one-letter code: Glutamyl-tRNA(Gln) amidotransferase subunit A, chloroplastic/mitochondrial (546 aa).

Positions Lys21 to Gln52 are disordered. The span at Ser27–Asp43 shows a compositional bias: polar residues. Residues Lys123 and Ser198 each act as charge relay system in the active site. The active-site Acyl-ester intermediate is the Ser222.

This sequence belongs to the amidase family. GatA subfamily. In terms of assembly, subunit of the heterotrimeric GatCAB amidotransferase (AdT) complex, composed of A, B and C subunits.

Its subcellular location is the mitochondrion. The protein localises to the plastid. The protein resides in the chloroplast stroma. It catalyses the reaction L-glutamyl-tRNA(Gln) + L-glutamine + ATP + H2O = L-glutaminyl-tRNA(Gln) + L-glutamate + ADP + phosphate + H(+). Functionally, allows the formation of correctly charged Gln-tRNA(Gln) through the transamidation of misacylated Glu-tRNA(Gln) in chloroplasts and mitochondria. The reaction takes place in the presence of glutamine and ATP through an activated gamma-phospho-Glu-tRNA(Gln). This Vitis vinifera (Grape) protein is Glutamyl-tRNA(Gln) amidotransferase subunit A, chloroplastic/mitochondrial.